The following is a 466-amino-acid chain: Ribulose bisphosphate carboxylase large chain (466 aa).

Lys5 carries the N6,N6,N6-trimethyllysine modification. Substrate is bound by residues Asn114 and Thr164. Lys166 acts as the Proton acceptor in catalysis. Lys168 provides a ligand contact to substrate. Residues Lys192, Asp194, and Glu195 each contribute to the Mg(2+) site. Residue Lys192 is modified to N6-carboxylysine. His285 functions as the Proton acceptor in the catalytic mechanism. Residues Arg286, His318, and Ser370 each coordinate substrate.

Belongs to the RuBisCO large chain family. Type I subfamily. As to quaternary structure, heterohexadecamer of 8 large chains and 8 small chains; disulfide-linked. The disulfide link is formed within the large subunit homodimers. Mg(2+) is required as a cofactor. In terms of processing, the disulfide bond which can form in the large chain dimeric partners within the hexadecamer appears to be associated with oxidative stress and protein turnover.

It localises to the plastid. The protein resides in the chloroplast. It catalyses the reaction 2 (2R)-3-phosphoglycerate + 2 H(+) = D-ribulose 1,5-bisphosphate + CO2 + H2O. It carries out the reaction D-ribulose 1,5-bisphosphate + O2 = 2-phosphoglycolate + (2R)-3-phosphoglycerate + 2 H(+). Functionally, ruBisCO catalyzes two reactions: the carboxylation of D-ribulose 1,5-bisphosphate, the primary event in carbon dioxide fixation, as well as the oxidative fragmentation of the pentose substrate in the photorespiration process. Both reactions occur simultaneously and in competition at the same active site. The protein is Ribulose bisphosphate carboxylase large chain of Drosera peltata (Pale sundew).